The following is a 296-amino-acid chain: Morphine 6-dehydrogenase (296 aa).

13-22 (GVKMPALGLG) serves as a coordination point for NADP(+). The Proton donor role is filled by Tyr-52. Position 110 (His-110) interacts with substrate.

Belongs to the aldo/keto reductase family. In terms of assembly, monomer.

It catalyses the reaction morphine + NAD(+) = morphinone + NADH + H(+). The enzyme catalyses morphine + NADP(+) = morphinone + NADPH + H(+). It functions in the pathway alkaloid degradation; codeine degradation. It participates in alkaloid degradation; morphine degradation. In terms of biological role, oxidizes only the C-6 hydroxy group of morphine and codeine. The sequence is that of Morphine 6-dehydrogenase (morA) from Pseudomonas putida (Arthrobacter siderocapsulatus).